Here is a 213-residue protein sequence, read N- to C-terminus: Imidazole glycerol phosphate synthase subunit HisH (213 aa).

The Glutamine amidotransferase type-1 domain occupies 8–213 (TVALIDYGAG…FLSRFLDWNP (206 aa)). Cys91 acts as the Nucleophile in catalysis. Residues His193 and Glu195 contribute to the active site.

Heterodimer of HisH and HisF.

It is found in the cytoplasm. It carries out the reaction 5-[(5-phospho-1-deoxy-D-ribulos-1-ylimino)methylamino]-1-(5-phospho-beta-D-ribosyl)imidazole-4-carboxamide + L-glutamine = D-erythro-1-(imidazol-4-yl)glycerol 3-phosphate + 5-amino-1-(5-phospho-beta-D-ribosyl)imidazole-4-carboxamide + L-glutamate + H(+). It catalyses the reaction L-glutamine + H2O = L-glutamate + NH4(+). The protein operates within amino-acid biosynthesis; L-histidine biosynthesis; L-histidine from 5-phospho-alpha-D-ribose 1-diphosphate: step 5/9. In terms of biological role, IGPS catalyzes the conversion of PRFAR and glutamine to IGP, AICAR and glutamate. The HisH subunit catalyzes the hydrolysis of glutamine to glutamate and ammonia as part of the synthesis of IGP and AICAR. The resulting ammonia molecule is channeled to the active site of HisF. This chain is Imidazole glycerol phosphate synthase subunit HisH, found in Zymomonas mobilis subsp. mobilis (strain ATCC 31821 / ZM4 / CP4).